Consider the following 282-residue polypeptide: MTAQLIDGNALSRQLRTEVAARTAALKSRGITPGLAVVLVGDNPASQVYVRNKVKACEDVGFHSVLEKYDASMSEEQLLARVQALNNDPSIHGILVQLPLPKHIDDHKVIEAISPLKDVDGFHVASAGALMVGQVGFKACTPYGCMKMLESIGMKDLRGKHAVVIGRSNIVGKPMAMMLLAANATVTVCHSGTADLAAMTRQADVVVAAVGKRNVLTADMVKPGAVVIDVGMNRNDEGKLCGDVDFEGVKQVAGYITPVPGGVGPMTITMLLVNTLEAAERL.

NADP(+) is bound by residues 166-168 (GRS) and Ser-191.

The protein belongs to the tetrahydrofolate dehydrogenase/cyclohydrolase family. As to quaternary structure, homodimer.

The enzyme catalyses (6R)-5,10-methylene-5,6,7,8-tetrahydrofolate + NADP(+) = (6R)-5,10-methenyltetrahydrofolate + NADPH. It carries out the reaction (6R)-5,10-methenyltetrahydrofolate + H2O = (6R)-10-formyltetrahydrofolate + H(+). It functions in the pathway one-carbon metabolism; tetrahydrofolate interconversion. In terms of biological role, catalyzes the oxidation of 5,10-methylenetetrahydrofolate to 5,10-methenyltetrahydrofolate and then the hydrolysis of 5,10-methenyltetrahydrofolate to 10-formyltetrahydrofolate. The chain is Bifunctional protein FolD from Acidovorax ebreus (strain TPSY) (Diaphorobacter sp. (strain TPSY)).